Reading from the N-terminus, the 237-residue chain is Phosphoribosylaminoimidazole-succinocarboxamide synthase (237 aa).

Belongs to the SAICAR synthetase family.

It carries out the reaction 5-amino-1-(5-phospho-D-ribosyl)imidazole-4-carboxylate + L-aspartate + ATP = (2S)-2-[5-amino-1-(5-phospho-beta-D-ribosyl)imidazole-4-carboxamido]succinate + ADP + phosphate + 2 H(+). It participates in purine metabolism; IMP biosynthesis via de novo pathway; 5-amino-1-(5-phospho-D-ribosyl)imidazole-4-carboxamide from 5-amino-1-(5-phospho-D-ribosyl)imidazole-4-carboxylate: step 1/2. The chain is Phosphoribosylaminoimidazole-succinocarboxamide synthase from Citrobacter koseri (strain ATCC BAA-895 / CDC 4225-83 / SGSC4696).